We begin with the raw amino-acid sequence, 582 residues long: Aspartate--tRNA ligase (582 aa).

L-aspartate is bound at residue glutamate 174. Positions glutamine 198–lysine 201 are aspartate. Position 220 (arginine 220) interacts with L-aspartate. ATP is bound by residues arginine 220–glutamate 222 and glutamine 229. Histidine 443 is an L-aspartate binding site. Residue glutamate 477 coordinates ATP. Arginine 484 is a binding site for L-aspartate. An ATP-binding site is contributed by glycine 529–arginine 532.

This sequence belongs to the class-II aminoacyl-tRNA synthetase family. Type 1 subfamily. In terms of assembly, homodimer.

It localises to the cytoplasm. It carries out the reaction tRNA(Asp) + L-aspartate + ATP = L-aspartyl-tRNA(Asp) + AMP + diphosphate. Functionally, catalyzes the attachment of L-aspartate to tRNA(Asp) in a two-step reaction: L-aspartate is first activated by ATP to form Asp-AMP and then transferred to the acceptor end of tRNA(Asp). The sequence is that of Aspartate--tRNA ligase from Streptococcus pyogenes serotype M1.